We begin with the raw amino-acid sequence, 332 residues long: MNQTEAAPVVSVSRVYAHVNEEMPREYWDYENMQEVFGYQDNYEIIRKVGRGKYSEVFEGLNVLNNSKCIIKVLKPVKYKKIKREIKILQNLAGGPNIISLLDIVRDPESKTPSLIFEFVDNIDFRTLYPTLSDYDIRYYSYELLKALDFCHSRGIMHRDVKPHNVMIDHKKRKLRLIDWGLAEFYHAGMEYNVRVASRYFKGPELLVDFREYDYSLDIWSFGVMFAALIFKKDTFFRGRDNYDQLVKIAKVLGTDELFAYVQKYQIVLDRQYDNILGQYPKRDWYSFVNRDNRSLANDEAIDLLNRLLRYDHQERLTCQEAMAHPYFQVLK.

A Protein kinase domain is found at 43-327 (YEIIRKVGRG…TCQEAMAHPY (285 aa)). ATP contacts are provided by residues 49–57 (VGRGKYSEV) and lysine 72. Residue aspartate 160 is the Proton acceptor of the active site.

This sequence belongs to the protein kinase superfamily. Ser/Thr protein kinase family. CK2 subfamily. In terms of assembly, tetramer composed of two alpha chains, one beta chain and one beta' chain.

The catalysed reaction is L-seryl-[protein] + ATP = O-phospho-L-seryl-[protein] + ADP + H(+). The enzyme catalyses L-threonyl-[protein] + ATP = O-phospho-L-threonyl-[protein] + ADP + H(+). Catalytic subunit of a constitutively active serine/threonine-protein kinase complex that phosphorylates a large number of substrates containing acidic residues C-terminal to the phosphorylated serine or threonine. The protein is Casein kinase II subunit alpha of Schizosaccharomyces pombe (strain 972 / ATCC 24843) (Fission yeast).